The sequence spans 391 residues: Heme A synthase (391 aa).

8 helical membrane-spanning segments follow: residues 37 to 57, 121 to 141, 152 to 172, 186 to 206, 229 to 249, 298 to 318, 332 to 352, and 354 to 374; these read IRLW…VGGL, RQLG…FLAA, LLAL…MVAS, LATH…QALL, TTVL…VAGI, FLHR…WIFG, LLAM…LSAA, and WQVA…ILHA. Position 300 (H300) interacts with heme. H360 is a binding site for heme.

This sequence belongs to the COX15/CtaA family. Type 2 subfamily. In terms of assembly, interacts with CtaB. Requires heme b as cofactor.

It is found in the cell membrane. The enzyme catalyses Fe(II)-heme o + 2 A + H2O = Fe(II)-heme a + 2 AH2. The protein operates within porphyrin-containing compound metabolism; heme A biosynthesis; heme A from heme O: step 1/1. Its function is as follows. Catalyzes the conversion of heme O to heme A by two successive hydroxylations of the methyl group at C8. The first hydroxylation forms heme I, the second hydroxylation results in an unstable dihydroxymethyl group, which spontaneously dehydrates, resulting in the formyl group of heme A. The polypeptide is Heme A synthase (Cereibacter sphaeroides (strain ATCC 17029 / ATH 2.4.9) (Rhodobacter sphaeroides)).